A 142-amino-acid chain; its full sequence is Large ribosomal subunit protein mL43 (142 aa).

Belongs to the mitochondrion-specific ribosomal protein mL43 family. Component of the mitochondrial large ribosomal subunit. Mature mitochondrial ribosomes consist of a small (37S) and a large (54S) subunit. The 37S subunit contains at least 33 different proteins and 1 molecule of RNA (15S). The 54S subunit contains at least 45 different proteins and 1 molecule of RNA (21S).

It is found in the mitochondrion. This Eremothecium gossypii (strain ATCC 10895 / CBS 109.51 / FGSC 9923 / NRRL Y-1056) (Yeast) protein is Large ribosomal subunit protein mL43 (MRPL51).